Here is an 89-residue protein sequence, read N- to C-terminus: Small ribosomal subunit protein uS15 (89 aa).

The protein belongs to the universal ribosomal protein uS15 family. Part of the 30S ribosomal subunit. Forms a bridge to the 50S subunit in the 70S ribosome, contacting the 23S rRNA.

One of the primary rRNA binding proteins, it binds directly to 16S rRNA where it helps nucleate assembly of the platform of the 30S subunit by binding and bridging several RNA helices of the 16S rRNA. Functionally, forms an intersubunit bridge (bridge B4) with the 23S rRNA of the 50S subunit in the ribosome. In Shewanella putrefaciens (strain CN-32 / ATCC BAA-453), this protein is Small ribosomal subunit protein uS15.